The following is a 275-amino-acid chain: Large ribosomal subunit protein uL2c (275 aa).

The segment at 224 to 263 is disordered; sequence VMNPVDHPHGGGEGRAPIGRKRPLTPWGRPALGKKSRKNH.

The protein belongs to the universal ribosomal protein uL2 family. Part of the 50S ribosomal subunit.

Its subcellular location is the plastid. It is found in the chloroplast. The polypeptide is Large ribosomal subunit protein uL2c (rpl2) (Chaetosphaeridium globosum (Charophycean green alga)).